Reading from the N-terminus, the 568-residue chain is Poly(A) polymerase (568 aa).

ATP contacts are provided by residues 87–89 (YGS), 99–102 (SDID), 100–102 (DID), Asp-154, Lys-215, Tyr-224, and 233–234 (GV). Residues Asp-100, Asp-102, and Asp-154 each coordinate Mg(2+). Phosphoserine is present on residues Ser-452 and Ser-550. The tract at residues 525–568 (NEKRPSKKSKRKNLDARHETVKRSKSDAASGDNINGTTAAVDVN) is disordered. Basic and acidic residues predominate over residues 536–550 (KNLDARHETVKRSKS).

It belongs to the poly(A) polymerase family. Component of the cleavage and polyadenylation factor (CPF) complex, which is composed of PTI1, SYC1, SSU72, GLC7, MPE1, REF2, PFS2, PTA1, YSH1/BRR5, SWD2, CFT2/YDH1, YTH1, CFT1/YHH1, FIP1 and PAP1. Interacts with FIR1 and RRP6. The cofactor is Mg(2+). Mn(2+) serves as cofactor.

The protein localises to the nucleus. It carries out the reaction RNA(n) + ATP = RNA(n)-3'-adenine ribonucleotide + diphosphate. Functionally, polymerase component of the cleavage and polyadenylation factor (CPF) complex, which plays a key role in polyadenylation-dependent pre-mRNA 3'-end formation and cooperates with cleavage factors including the CFIA complex and NAB4/CFIB. The protein is Poly(A) polymerase (PAP1) of Saccharomyces cerevisiae (strain ATCC 204508 / S288c) (Baker's yeast).